The chain runs to 347 residues: NAD-dependent alcohol dehydrogenase (347 aa).

Lys11 is modified (N6-methyllysine; partial). Zn(2+)-binding residues include Cys38, His68, Glu98, Cys101, Cys104, Cys112, and Cys154. An N6-methyllysine; partial modification is found at Lys213.

The protein belongs to the zinc-containing alcohol dehydrogenase family. Homodimer and homotetramer. Zn(2+) is required as a cofactor.

The catalysed reaction is a primary alcohol + NAD(+) = an aldehyde + NADH + H(+). It carries out the reaction a secondary alcohol + NAD(+) = a ketone + NADH + H(+). The protein is NAD-dependent alcohol dehydrogenase (adh) of Saccharolobus solfataricus (strain ATCC 35092 / DSM 1617 / JCM 11322 / P2) (Sulfolobus solfataricus).